Here is an 86-residue protein sequence, read N- to C-terminus: Large ribosomal subunit protein bL27c (86 aa).

Residues 1–20 form a disordered region; sequence MAHKKGSGSTRNGRDSNAQR. A compositionally biased stretch (polar residues) spans 7–19; the sequence is SGSTRNGRDSNAQ.

The protein belongs to the bacterial ribosomal protein bL27 family.

The protein localises to the plastid. The protein resides in the chloroplast. The polypeptide is Large ribosomal subunit protein bL27c (rpl27) (Guillardia theta (Cryptophyte)).